The chain runs to 354 residues: MLARLKKIQQKYQNLQQDLLQNQSISNKINIFKNLSKLEPIVELFQQYLTLEEQLTNITKALNQDQIEDKEILELAQKEKETLSQQKKVLWNQLRILLLPQDPEDQKNVILEIKGAVGGNEANLFAADLLRTYMKYAESKKWKVEILNLHPSIKGGLSSVELLISGQNIYSFLKYESGVHRVQRVPATEVQGRIHTSTAIVLVLPEAKEVEIKIDWNDIRTDTFNSSGPGGQSVNTTKSAVRLSHLPSGISVACQEGKSQHENKEKAFTLLKARIYNQILNAKQEAENKHRKSLVGTGDRSEKIRTYNYPQNRITDHRIGLTLQKLDIIMEGKLDFIIEPLIDATQKEKLVQSE.

Q232 is subject to N5-methylglutamine.

This sequence belongs to the prokaryotic/mitochondrial release factor family. In terms of processing, methylated by PrmC. Methylation increases the termination efficiency of RF1.

It localises to the cytoplasm. Peptide chain release factor 1 directs the termination of translation in response to the peptide chain termination codons UAG and UAA. This Phytoplasma australiense protein is Peptide chain release factor 1.